A 148-amino-acid chain; its full sequence is UPF0756 membrane protein KPN78578_11500 (148 aa).

4 helical membrane passes run 14-34 (ALGF…LIIV), 51-71 (LTVG…SGTL), 86-106 (LLAI…VSLM), and 121-141 (VLGV…AGII).

The protein belongs to the UPF0756 family.

The protein localises to the cell membrane. This Klebsiella pneumoniae subsp. pneumoniae (strain ATCC 700721 / MGH 78578) protein is UPF0756 membrane protein KPN78578_11500.